We begin with the raw amino-acid sequence, 557 residues long: Urocanate hydratase (557 aa).

NAD(+) is bound by residues 48–49, glutamine 126, 178–180, aspartate 198, arginine 203, 244–245, 265–269, 274–275, and tyrosine 323; these read GG, GMG, NA, QTSAH, and YL. Residue cysteine 411 is part of the active site. Glycine 493 is an NAD(+) binding site.

It belongs to the urocanase family. It depends on NAD(+) as a cofactor.

Its subcellular location is the cytoplasm. The catalysed reaction is 4-imidazolone-5-propanoate = trans-urocanate + H2O. Its pathway is amino-acid degradation; L-histidine degradation into L-glutamate; N-formimidoyl-L-glutamate from L-histidine: step 2/3. Its function is as follows. Catalyzes the conversion of urocanate to 4-imidazolone-5-propionate. This is Urocanate hydratase from Beutenbergia cavernae (strain ATCC BAA-8 / DSM 12333 / CCUG 43141 / JCM 11478 / NBRC 16432 / NCIMB 13614 / HKI 0122).